The sequence spans 131 residues: Large ribosomal subunit protein bL17 (131 aa).

The protein belongs to the bacterial ribosomal protein bL17 family. As to quaternary structure, part of the 50S ribosomal subunit. Contacts protein L32.

The polypeptide is Large ribosomal subunit protein bL17 (Shewanella sp. (strain ANA-3)).